The sequence spans 983 residues: Protein translocase subunit SecA (983 aa).

Residues Gln-83, Gly-101–Thr-105, and Asp-489 each bind ATP. The tract at residues Ile-948 to Glu-983 is disordered. The span at Glu-973–Glu-983 shows a compositional bias: polar residues.

It belongs to the SecA family. Monomer and homodimer. Part of the essential Sec protein translocation apparatus which comprises SecA, SecYEG and auxiliary proteins SecDF. Other proteins may also be involved.

The protein resides in the cell membrane. It localises to the cytoplasm. It catalyses the reaction ATP + H2O + cellular proteinSide 1 = ADP + phosphate + cellular proteinSide 2.. In terms of biological role, part of the Sec protein translocase complex. Interacts with the SecYEG preprotein conducting channel. Has a central role in coupling the hydrolysis of ATP to the transfer of proteins into and across the cell membrane, serving as an ATP-driven molecular motor driving the stepwise translocation of polypeptide chains across the membrane. In Mesomycoplasma hyopneumoniae (strain J / ATCC 25934 / NCTC 10110) (Mycoplasma hyopneumoniae), this protein is Protein translocase subunit SecA.